A 150-amino-acid polypeptide reads, in one-letter code: Large ribosomal subunit protein uL13 (150 aa).

It belongs to the universal ribosomal protein uL13 family. As to quaternary structure, part of the 50S ribosomal subunit.

This protein is one of the early assembly proteins of the 50S ribosomal subunit, although it is not seen to bind rRNA by itself. It is important during the early stages of 50S assembly. The chain is Large ribosomal subunit protein uL13 from Chlamydia caviae (strain ATCC VR-813 / DSM 19441 / 03DC25 / GPIC) (Chlamydophila caviae).